A 260-amino-acid polypeptide reads, in one-letter code: Neuraminyllactose-binding hemagglutinin (260 aa).

The signal sequence occupies residues 1–27; that stretch reads MKTNGHFKDFAWKKCFLGASVVALLVG. The N-palmitoyl cysteine moiety is linked to residue cysteine 28. Cysteine 28 carries S-diacylglycerol cysteine lipidation.

Its subcellular location is the cell outer membrane. This Helicobacter pylori (strain J99 / ATCC 700824) (Campylobacter pylori J99) protein is Neuraminyllactose-binding hemagglutinin (hpaA).